The chain runs to 235 residues: Sugar fermentation stimulation protein homolog (235 aa).

The protein belongs to the SfsA family.

The protein is Sugar fermentation stimulation protein homolog of Alkaliphilus oremlandii (strain OhILAs) (Clostridium oremlandii (strain OhILAs)).